A 45-amino-acid polypeptide reads, in one-letter code: Large ribosomal subunit protein bL34 (45 aa).

Residues 1-24 (MTKRTFGGTSRKRKRVSGFRVRMR) form a disordered region. Over residues 10–24 (SRKRKRVSGFRVRMR) the composition is skewed to basic residues.

Belongs to the bacterial ribosomal protein bL34 family.

The polypeptide is Large ribosomal subunit protein bL34 (Prochlorococcus marinus (strain MIT 9303)).